Here is a 568-residue protein sequence, read N- to C-terminus: Oxygen-dependent choline dehydrogenase (568 aa).

Residue 8 to 37 (DYVIIGGGSAGSVLGNRLTEDKDKEVLVLE) coordinates FAD. The active-site Proton acceptor is His473.

Belongs to the GMC oxidoreductase family. FAD is required as a cofactor.

The catalysed reaction is choline + A = betaine aldehyde + AH2. The enzyme catalyses betaine aldehyde + NAD(+) + H2O = glycine betaine + NADH + 2 H(+). It functions in the pathway amine and polyamine biosynthesis; betaine biosynthesis via choline pathway; betaine aldehyde from choline (cytochrome c reductase route): step 1/1. In terms of biological role, involved in the biosynthesis of the osmoprotectant glycine betaine. Catalyzes the oxidation of choline to betaine aldehyde and betaine aldehyde to glycine betaine at the same rate. This chain is Oxygen-dependent choline dehydrogenase, found in Staphylococcus haemolyticus (strain JCSC1435).